The sequence spans 568 residues: Protein downstream neighbor of son homolog (568 aa).

Disordered stretches follow at residues 28 to 48 and 311 to 355; these read NKLAARVSNNNNRRPRHQVDE and MPLK…DDDE. Over residues 315–335 the composition is skewed to polar residues; the sequence is SDNSGNAHDNSFNEESTTTSL.

It belongs to the DONSON family. As to expression, expression peaks during late G1 and S phase (at protein level).

The protein resides in the nucleus. Functionally, essential for DNA amplification in the ovary and required for cell proliferation during development. The protein is Protein downstream neighbor of son homolog (hd) of Drosophila melanogaster (Fruit fly).